The primary structure comprises 195 residues: Protein GrpE (195 aa).

The protein belongs to the GrpE family. Homodimer.

Its subcellular location is the cytoplasm. Participates actively in the response to hyperosmotic and heat shock by preventing the aggregation of stress-denatured proteins, in association with DnaK and GrpE. It is the nucleotide exchange factor for DnaK and may function as a thermosensor. Unfolded proteins bind initially to DnaJ; upon interaction with the DnaJ-bound protein, DnaK hydrolyzes its bound ATP, resulting in the formation of a stable complex. GrpE releases ADP from DnaK; ATP binding to DnaK triggers the release of the substrate protein, thus completing the reaction cycle. Several rounds of ATP-dependent interactions between DnaJ, DnaK and GrpE are required for fully efficient folding. This Francisella tularensis subsp. holarctica (strain OSU18) protein is Protein GrpE.